Consider the following 690-residue polypeptide: Protein arginine N-methyltransferase 7 (690 aa).

SAM-dependent MTase PRMT-type domains follow at residues 5 to 355 (FQDS…FSLW) and 364 to 690 (KEPL…EEEQ).

It belongs to the class I-like SAM-binding methyltransferase superfamily. Protein arginine N-methyltransferase family. PRMT7 subfamily.

Functionally, essential arginine methyltransferase that can both catalyze the formation of omega-N monomethylarginine (MMA) and symmetrical dimethylarginine (sDMA). Specifically mediates the symmetrical dimethylation of arginine residues in the small nuclear ribonucleoproteins SmD1 and SmD3. The sequence is that of Protein arginine N-methyltransferase 7 (Art7) from Anopheles gambiae (African malaria mosquito).